We begin with the raw amino-acid sequence, 483 residues long: Regulatory protein ViaA (483 aa).

This sequence belongs to the ViaA family. As to quaternary structure, homodimer. Interacts with RavA.

The protein localises to the cytoplasm. Its function is as follows. Component of the RavA-ViaA chaperone complex, which may act on the membrane to optimize the function of some of the respiratory chains. ViaA stimulates the ATPase activity of RavA. The chain is Regulatory protein ViaA from Escherichia coli O6:K15:H31 (strain 536 / UPEC).